A 152-amino-acid polypeptide reads, in one-letter code: UPF0266 membrane protein ESA_01432 (152 aa).

Helical transmembrane passes span 1 to 21 (MTLTDGVLVIFIIALLGWAIY), 45 to 65 (ADSLIFTGLVAILIWQNVASH), and 67 to 87 (ALLTTWLLGALGLLAIYLFWI).

The protein belongs to the UPF0266 family.

The protein localises to the cell inner membrane. This chain is UPF0266 membrane protein ESA_01432, found in Cronobacter sakazakii (strain ATCC BAA-894) (Enterobacter sakazakii).